Here is a 256-residue protein sequence, read N- to C-terminus: Trypsin CFT-1 (256 aa).

The first 17 residues, 1 to 17, serve as a signal peptide directing secretion; it reads MRVTLALVALCLASVAA. A propeptide spans 18 to 24 (activation peptide); sequence LPEKQQR. The region spanning 25 to 256 is the Peptidase S1 domain; sequence IVGGSVTTIE…RFTAWIQANA (232 aa). Cys-55 and Cys-71 are joined by a disulfide. Catalysis depends on charge relay system residues His-70 and Asp-115. 2 disulfide bridges follow: Cys-180–Cys-197 and Cys-209–Cys-233. Ser-213 functions as the Charge relay system in the catalytic mechanism.

Belongs to the peptidase S1 family.

Its subcellular location is the secreted. It is found in the extracellular space. The catalysed reaction is Preferential cleavage: Arg-|-Xaa, Lys-|-Xaa.. Functionally, responsible for the activation of delta-endotoxin from Bacillus thuringiensis. The sequence is that of Trypsin CFT-1 from Choristoneura fumiferana (Spruce budworm moth).